We begin with the raw amino-acid sequence, 324 residues long: Glycerol-3-phosphate dehydrogenase [NAD(P)+] (324 aa).

Residues Phe11, Arg31, and Lys107 each contribute to the NADPH site. Sn-glycerol 3-phosphate is bound by residues Lys107 and Gly135. Ala139 is a binding site for NADPH. Sn-glycerol 3-phosphate is bound by residues Lys190, Asp245, Ser255, Arg256, and Asn257. The active-site Proton acceptor is Lys190. Arg256 serves as a coordination point for NADPH. NADPH is bound by residues Val278 and Glu279.

Belongs to the NAD-dependent glycerol-3-phosphate dehydrogenase family.

It localises to the cytoplasm. It catalyses the reaction sn-glycerol 3-phosphate + NAD(+) = dihydroxyacetone phosphate + NADH + H(+). The enzyme catalyses sn-glycerol 3-phosphate + NADP(+) = dihydroxyacetone phosphate + NADPH + H(+). It participates in membrane lipid metabolism; glycerophospholipid metabolism. Catalyzes the reduction of the glycolytic intermediate dihydroxyacetone phosphate (DHAP) to sn-glycerol 3-phosphate (G3P), the key precursor for phospholipid synthesis. The polypeptide is Glycerol-3-phosphate dehydrogenase [NAD(P)+] (Anaplasma phagocytophilum (strain HZ)).